The sequence spans 204 residues: MSRGALIVFEGLDKSGKTTQCMNIMESIPSNTIKYLNFPQRSTVTGKMIDDYLTRKKTYNDHIVNLLFCANRWEFASFIQEQLEQGITLIVDRYAFSGVAYAAAKGASMTLSKSYESGLPKPDLVIFLESGSKEINRNVGEEIYEDVTFQQKVLQEYKKMIEEGDIHWQIISSEFEEDVKKELIKNIVIEAIHTVTGPVGQLWM.

11–18 provides a ligand contact to ATP; sequence GLDKSGKT.

It belongs to the thymidylate kinase family.

It carries out the reaction dTMP + ATP = dTDP + ADP. The protein operates within pyrimidine metabolism; dTTP biosynthesis. This Rabbitpox virus (strain Utrecht) (RPV) protein is Thymidylate kinase (TMK).